A 341-amino-acid chain; its full sequence is MSLAGGDRPIRVLVADDSELFRELLARVVAAEPGFEVAAVAADGDAAAAMARALRPDVVTMDLHMPDADGYSGIARIMAETPTPILVLTANPTEAAGFRALSLGALDILEKPSATADLGEYGRLIRSRLRLLAGVKVIRHLRGLRERRDAAPARAARVEVVVIGASLGGPRALAAVLRGLPPDFPAPIAVVQHIADGFTAGLAGWLAQESRLDVREARHGDPLRAGRVLIAPSGRHLVLGEGVARLSDAPPVDTFRPSVTPLFTSAARQYGRRCCGVLLTGMGRDGAEGLRVIKDAGGPTLAQDEATSAVFGMARAAVELGAVDRVLPVDEIPRALRELTR.

The region spanning 11-126 is the Response regulatory domain; that stretch reads RVLVADDSEL…DLGEYGRLIR (116 aa). Aspartate 62 carries the post-translational modification 4-aspartylphosphate. A CheB-type methylesterase domain is found at 152–341; that stretch reads PARAARVEVV…IPRALRELTR (190 aa). Catalysis depends on residues serine 166, histidine 193, and aspartate 285.

Belongs to the CheB family. Post-translationally, phosphorylated by CheA. Phosphorylation of the N-terminal regulatory domain activates the methylesterase activity.

Its subcellular location is the cytoplasm. The catalysed reaction is [protein]-L-glutamate 5-O-methyl ester + H2O = L-glutamyl-[protein] + methanol + H(+). It carries out the reaction L-glutaminyl-[protein] + H2O = L-glutamyl-[protein] + NH4(+). Involved in chemotaxis. Part of a chemotaxis signal transduction system that modulates chemotaxis in response to various stimuli. Catalyzes the demethylation of specific methylglutamate residues introduced into the chemoreceptors (methyl-accepting chemotaxis proteins or MCP) by CheR. Also mediates the irreversible deamidation of specific glutamine residues to glutamic acid. This Anaeromyxobacter dehalogenans (strain 2CP-C) protein is Protein-glutamate methylesterase/protein-glutamine glutaminase 2.